Reading from the N-terminus, the 106-residue chain is MVIRGAVYRVDFGDAKRGHEQRGRRYAVVISPGSMPWSVVTVVPTSTSAQPAVFRPELEVMGTKTRFLVDQIRTIGIVYVHGDPVDYLDRDQMAKVEHAVARYLGL.

It belongs to the PemK/MazF family. Forms a complex with cognate antitoxin Rv3098B/RVBD_3098B.

Functionally, putative toxic component of a possible type II toxin-antitoxin (TA) system. Its toxic effect may be neutralized by cognate antitoxin Rv3098B/RVBD_3098B. This Mycobacterium tuberculosis (strain ATCC 25618 / H37Rv) protein is Putative toxin Rv3098A/RVBD_3098A.